Here is a 60-residue protein sequence, read N- to C-terminus: Small, acid-soluble spore protein H (60 aa).

This sequence belongs to the SspH family.

The protein resides in the spore core. The chain is Small, acid-soluble spore protein H from Halalkalibacterium halodurans (strain ATCC BAA-125 / DSM 18197 / FERM 7344 / JCM 9153 / C-125) (Bacillus halodurans).